The primary structure comprises 341 residues: L-threonine 3-dehydrogenase (341 aa).

Cys38 is a binding site for Zn(2+). Residues Thr40 and His43 each act as charge relay system in the active site. Residues His63, Glu64, Cys93, Cys96, Cys99, and Cys107 each contribute to the Zn(2+) site. Residues Ile175, Asp195, Arg200, 262–264 (LGI), and 286–287 (IY) each bind NAD(+).

This sequence belongs to the zinc-containing alcohol dehydrogenase family. As to quaternary structure, homotetramer. Requires Zn(2+) as cofactor.

It is found in the cytoplasm. It carries out the reaction L-threonine + NAD(+) = (2S)-2-amino-3-oxobutanoate + NADH + H(+). Its pathway is amino-acid degradation; L-threonine degradation via oxydo-reductase pathway; glycine from L-threonine: step 1/2. Functionally, catalyzes the NAD(+)-dependent oxidation of L-threonine to 2-amino-3-ketobutyrate. The sequence is that of L-threonine 3-dehydrogenase from Proteus mirabilis (strain HI4320).